A 143-amino-acid polypeptide reads, in one-letter code: Endoribonuclease YbeY (143 aa).

Residues His-106, His-110, and His-116 each contribute to the Zn(2+) site.

This sequence belongs to the endoribonuclease YbeY family. Requires Zn(2+) as cofactor.

It is found in the cytoplasm. Functionally, single strand-specific metallo-endoribonuclease involved in late-stage 70S ribosome quality control and in maturation of the 3' terminus of the 16S rRNA. The protein is Endoribonuclease YbeY of Petrotoga mobilis (strain DSM 10674 / SJ95).